Consider the following 102-residue polypeptide: uncharacterized protein (102 aa).

The chain crosses the membrane as a helical span at residues 27–47 (TISLVSAGLLEEIFLLFGLTF).

The protein resides in the membrane. This is an uncharacterized protein from Saccharomyces cerevisiae (strain ATCC 204508 / S288c) (Baker's yeast).